Here is a 210-residue protein sequence, read N- to C-terminus: Cytochrome c oxidase subunit 2 (210 aa).

Over 1–15 (MSFILTFWMIFLMDS) the chain is Mitochondrial intermembrane. A helical membrane pass occupies residues 16–36 (IIVLISFSIFLSVWICALIIA). Residues 37–63 (TVLTVTKINNIYCTWDFISSKFIDTYW) lie on the Mitochondrial matrix side of the membrane. Residues 64-84 (FVLGMMFILCLLLRLCLLLYF) form a helical membrane-spanning segment. Residues 85-210 (SCINFVSFDL…GFMPIVINFI (126 aa)) lie on the Mitochondrial intermembrane side of the membrane. His-157, Cys-192, Glu-194, Cys-196, His-200, and Met-203 together coordinate Cu cation. Residue Glu-194 participates in Mg(2+) binding.

This sequence belongs to the cytochrome c oxidase subunit 2 family. As to quaternary structure, component of the cytochrome c oxidase (complex IV, CIV), a multisubunit enzyme composed of a catalytic core of 3 subunits and several supernumerary subunits. The complex exists as a monomer or a dimer and forms supercomplexes (SCs) in the inner mitochondrial membrane with ubiquinol-cytochrome c oxidoreductase (cytochrome b-c1 complex, complex III, CIII). Cu cation serves as cofactor.

The protein localises to the mitochondrion inner membrane. The enzyme catalyses 4 Fe(II)-[cytochrome c] + O2 + 8 H(+)(in) = 4 Fe(III)-[cytochrome c] + 2 H2O + 4 H(+)(out). Functionally, component of the cytochrome c oxidase, the last enzyme in the mitochondrial electron transport chain which drives oxidative phosphorylation. The respiratory chain contains 3 multisubunit complexes succinate dehydrogenase (complex II, CII), ubiquinol-cytochrome c oxidoreductase (cytochrome b-c1 complex, complex III, CIII) and cytochrome c oxidase (complex IV, CIV), that cooperate to transfer electrons derived from NADH and succinate to molecular oxygen, creating an electrochemical gradient over the inner membrane that drives transmembrane transport and the ATP synthase. Cytochrome c oxidase is the component of the respiratory chain that catalyzes the reduction of oxygen to water. Electrons originating from reduced cytochrome c in the intermembrane space (IMS) are transferred via the dinuclear copper A center (CU(A)) of subunit 2 and heme A of subunit 1 to the active site in subunit 1, a binuclear center (BNC) formed by heme A3 and copper B (CU(B)). The BNC reduces molecular oxygen to 2 water molecules using 4 electrons from cytochrome c in the IMS and 4 protons from the mitochondrial matrix. This is Cytochrome c oxidase subunit 2 (COXII) from Trypanosoma brucei brucei.